Here is a 349-residue protein sequence, read N- to C-terminus: DNA replication and repair protein RecF (349 aa).

ATP is bound at residue 30 to 37; sequence GKNGSGKT.

Belongs to the RecF family.

The protein resides in the cytoplasm. In terms of biological role, the RecF protein is involved in DNA metabolism; it is required for DNA replication and normal SOS inducibility. RecF binds preferentially to single-stranded, linear DNA. It also seems to bind ATP. The protein is DNA replication and repair protein RecF of Francisella tularensis subsp. mediasiatica (strain FSC147).